The following is a 373-amino-acid chain: WAT1-related protein At4g08300 (373 aa).

Helical transmembrane passes span 11-31 (PIIAIISLQFGYAGMYIITMV), 41-61 (ILATYRHVVATIVIAPFALIL), 67-87 (PKMTWPLFLRILALGFLEPLL), 102-122 (TYSSAFVNALPAITFIMAVIF), 139-159 (IGTAITVGGAMVMTLYKGPAI), 185-205 (WVTGTLAVMGSITTWAGFFIL), 219-239 (LVMWICAMGTVLNTIASLIMV), 255-275 (AAVYSGVVCSGMAYYIQSIVI), 281-301 (VFTTSFSPMCMIITAFLGVLV), and 306-326 (IHLGSIIGAIFIVFGLYSVVW). 2 EamA domains span residues 23 to 151 (AGMY…AMVM) and 198 to 325 (TWAG…YSVV).

The protein belongs to the drug/metabolite transporter (DMT) superfamily. Plant drug/metabolite exporter (P-DME) (TC 2.A.7.4) family.

Its subcellular location is the membrane. In Arabidopsis thaliana (Mouse-ear cress), this protein is WAT1-related protein At4g08300.